Reading from the N-terminus, the 647-residue chain is XK-related protein 4 (647 aa).

Residues 142-162 traverse the membrane as a helical segment; it reads WFGLTLFFVVLGSLSVQVFSF. The interval 193–238 is disordered; that stretch reads VSSGSAAGEGEARPSTPQRQASNASKSNIAATNSGSNSNGATRTSG. Ser-197 is subject to Phosphoserine. Residues 207 to 236 are compositionally biased toward polar residues; that stretch reads STPQRQASNASKSNIAATNSGSNSNGATRT. The next 7 helical transmembrane spans lie at 245 to 265, 328 to 348, 362 to 382, 393 to 415, 425 to 445, 454 to 474, and 484 to 504; these read CSFCIWLLQSLIHILQLGQVW, LQALQGFTAAASLVSLAWALA, KPISYMAVIIQFCWHFFTIAA, VFQLYFGIFIVLHWCIMTFWIVH, WEEIVFDMVVGIIYIFSWFNV, LFIYYFVILLENTALSALWYL, and FAIPALCVVFSSFLTGVVFML.

It belongs to the XK family. In terms of assembly, homodimer; homodimerization takes place upon caspase cleavage. Interacts with the processed C-terminus of XRCC4 (protein XRCC4, C-terminus); interaction promotes the phospholipid scramblase activity. In terms of processing, undergoes proteolytic processing by caspase-3 (CASP3), caspase-6 (CASP6) and caspase-7 (CASP7) to generate the XK-related protein 4, processed form, leading to its activation.

It is found in the cell membrane. The enzyme catalyses a 1,2-diacyl-sn-glycero-3-phospho-L-serine(in) = a 1,2-diacyl-sn-glycero-3-phospho-L-serine(out). With respect to regulation, phospholipid scramblase activity is activated upon caspase cleavage to generate the XK-related protein 4, processed form. Does not act prior the onset of apoptosis. Its activity is regulated as follows. Homodimerizes upon caspase cleavage. Phospholipid scramblase activity is activated following interaction with the processed C-terminus of XRCC4 (protein XRCC4, C-terminus). Functionally, phospholipid scramblase that promotes phosphatidylserine exposure on apoptotic cell surface. Phosphatidylserine is a specific marker only present at the surface of apoptotic cells and acts as a specific signal for engulfment. The chain is XK-related protein 4 from Rattus norvegicus (Rat).